Reading from the N-terminus, the 74-residue chain is Protein SOM1, mitochondrial (74 aa).

As to quaternary structure, component of the mitochondrial inner membrane peptidase (IMP) complex which at least consists of IMP1, IMP2 and SOM1.

It is found in the mitochondrion inner membrane. Non-catalytic component of the mitochondrial inner membrane peptidase (IMP) complex. IMP catalyzes the removal of signal peptides required for the targeting of proteins from the mitochondrial matrix, across the inner membrane, into the inter-membrane space. SOM1 facilitates cleavage of a subset of IMP substrates. The polypeptide is Protein SOM1, mitochondrial (SOM1) (Saccharomyces cerevisiae (strain ATCC 204508 / S288c) (Baker's yeast)).